Consider the following 545-residue polypeptide: Chaperonin GroEL (545 aa).

Residues 29–32 (TLGP), 86–90 (DGTTT), G413, 476–478 (NAA), and D492 each bind ATP.

It belongs to the chaperonin (HSP60) family. In terms of assembly, forms a cylinder of 14 subunits composed of two heptameric rings stacked back-to-back. Interacts with the co-chaperonin GroES.

It is found in the cytoplasm. The catalysed reaction is ATP + H2O + a folded polypeptide = ADP + phosphate + an unfolded polypeptide.. Functionally, together with its co-chaperonin GroES, plays an essential role in assisting protein folding. The GroEL-GroES system forms a nano-cage that allows encapsulation of the non-native substrate proteins and provides a physical environment optimized to promote and accelerate protein folding. The polypeptide is Chaperonin GroEL (Shouchella clausii (strain KSM-K16) (Alkalihalobacillus clausii)).